A 307-amino-acid polypeptide reads, in one-letter code: Ribonuclease Z (307 aa).

His-63, His-65, Asp-67, His-68, His-143, Asp-213, and His-271 together coordinate Zn(2+). Asp-67 acts as the Proton acceptor in catalysis.

It belongs to the RNase Z family. As to quaternary structure, homodimer. Zn(2+) is required as a cofactor.

The enzyme catalyses Endonucleolytic cleavage of RNA, removing extra 3' nucleotides from tRNA precursor, generating 3' termini of tRNAs. A 3'-hydroxy group is left at the tRNA terminus and a 5'-phosphoryl group is left at the trailer molecule.. Zinc phosphodiesterase, which displays some tRNA 3'-processing endonuclease activity. Probably involved in tRNA maturation, by removing a 3'-trailer from precursor tRNA. The polypeptide is Ribonuclease Z (Lactococcus lactis subsp. cremoris (strain MG1363)).